The sequence spans 376 residues: tRNA 2-selenouridine synthase (376 aa).

In terms of domain architecture, Rhodanese spans 15–138 (FVAGKPLIDL…MRQYLIGVIE (124 aa)). Cys-98 serves as the catalytic S-selanylcysteine intermediate.

It belongs to the SelU family. Monomer.

It carries out the reaction 5-methylaminomethyl-2-thiouridine(34) in tRNA + selenophosphate + (2E)-geranyl diphosphate + H2O + H(+) = 5-methylaminomethyl-2-selenouridine(34) in tRNA + (2E)-thiogeraniol + phosphate + diphosphate. The catalysed reaction is 5-methylaminomethyl-2-thiouridine(34) in tRNA + (2E)-geranyl diphosphate = 5-methylaminomethyl-S-(2E)-geranyl-thiouridine(34) in tRNA + diphosphate. It catalyses the reaction 5-methylaminomethyl-S-(2E)-geranyl-thiouridine(34) in tRNA + selenophosphate + H(+) = 5-methylaminomethyl-2-(Se-phospho)selenouridine(34) in tRNA + (2E)-thiogeraniol. The enzyme catalyses 5-methylaminomethyl-2-(Se-phospho)selenouridine(34) in tRNA + H2O = 5-methylaminomethyl-2-selenouridine(34) in tRNA + phosphate. Its function is as follows. Involved in the post-transcriptional modification of the uridine at the wobble position (U34) of tRNA(Lys), tRNA(Glu) and tRNA(Gln). Catalyzes the conversion of 2-thiouridine (S2U-RNA) to 2-selenouridine (Se2U-RNA). Acts in a two-step process involving geranylation of 2-thiouridine (S2U) to S-geranyl-2-thiouridine (geS2U) and subsequent selenation of the latter derivative to 2-selenouridine (Se2U) in the tRNA chain. This Shewanella oneidensis (strain ATCC 700550 / JCM 31522 / CIP 106686 / LMG 19005 / NCIMB 14063 / MR-1) protein is tRNA 2-selenouridine synthase.